The primary structure comprises 263 residues: Dermonecrotic toxin SpaSicTox-betaIF1 (263 aa).

Mg(2+)-binding residues include glutamate 15 and aspartate 17. Catalysis depends on histidine 31, which acts as the Nucleophile. Disulfide bonds link cysteine 35–cysteine 41 and cysteine 37–cysteine 179. Aspartate 75 lines the Mg(2+) pocket.

This sequence belongs to the arthropod phospholipase D family. Class II subfamily. Mg(2+) is required as a cofactor. As to expression, expressed by the venom gland.

It localises to the secreted. It carries out the reaction an N-(acyl)-sphingosylphosphocholine = an N-(acyl)-sphingosyl-1,3-cyclic phosphate + choline. The enzyme catalyses an N-(acyl)-sphingosylphosphoethanolamine = an N-(acyl)-sphingosyl-1,3-cyclic phosphate + ethanolamine. It catalyses the reaction a 1-acyl-sn-glycero-3-phosphocholine = a 1-acyl-sn-glycero-2,3-cyclic phosphate + choline. The catalysed reaction is a 1-acyl-sn-glycero-3-phosphoethanolamine = a 1-acyl-sn-glycero-2,3-cyclic phosphate + ethanolamine. In terms of biological role, dermonecrotic toxins cleave the phosphodiester linkage between the phosphate and headgroup of certain phospholipids (sphingolipid and lysolipid substrates), forming an alcohol (often choline) and a cyclic phosphate. This toxin acts on sphingomyelin (SM). It may also act on ceramide phosphoethanolamine (CPE), lysophosphatidylcholine (LPC) and lysophosphatidylethanolamine (LPE), but not on lysophosphatidylserine (LPS), and lysophosphatidylglycerol (LPG). It acts by transphosphatidylation, releasing exclusively cyclic phosphate products as second products. Induces dermonecrosis, hemolysis, increased vascular permeability, edema, inflammatory response, and platelet aggregation. In Sicarius patagonicus (Six-eyed sand spider), this protein is Dermonecrotic toxin SpaSicTox-betaIF1.